The primary structure comprises 661 residues: Vasorin (661 aa).

A signal peptide spans 1–19 (MWHLLVWIILLATAQQMIT). The 31-residue stretch at 20 to 50 (EGCPAGCQCNTPQTVFCLARKNSNFPRSVPP) folds into the LRRNT domain. At 20-563 (EGCPAGCQCN…VTQSQEGNLT (544 aa)) the chain is on the extracellular side. 10 LRR repeats span residues 52-72 (TLNL…SFIG), 75-96 (GLHL…VFRN), 99-120 (NLSN…TFQG), 123-144 (RLER…AFKG), 147-168 (SLLE…SLPH), 169-189 (LLLL…VFNA), 191-212 (NIES…LLSG), 215-237 (NLHE…HGLT), 238-258 (KLNI…LSNL), and 259-281 (PALQ…LFRS). N-linked (GlcNAc...) asparagine glycosylation occurs at asparagine 99. Residues 293–346 (NPFNCVCSLGWLSEWMRVSGVVLLRPDETRCHFPPKNAGKTLRQLRDSEYGCPA) form the LRRCT domain. Low complexity predominate over residues 348 to 385 (TTIQMPSTMPPSTTTGPPTTTKHLQTEAPTTASTTTTT). Positions 348–395 (TTIQMPSTMPPSTTTGPPTTTKHLQTEAPTTASTTTTTIPHQEQEEDT) are disordered. The EGF-like domain maps to 403–440 (EDTLCPPQTCLNGGSCHLDPTGQLECECPPGFQGTYCE). 3 cysteine pairs are disulfide-bonded: cysteine 407/cysteine 418, cysteine 412/cysteine 428, and cysteine 430/cysteine 439. Residues 455 to 543 (EQVKIIEVTV…EEDLCTETHT (89 aa)) enclose the Fibronectin type-III domain. Residues asparagine 518 and asparagine 561 are each glycosylated (N-linked (GlcNAc...) asparagine). The chain crosses the membrane as a helical span at residues 564–584 (LVLVPAVAAGILLSAAVAAAA). The Cytoplasmic segment spans residues 585-661 (CYARRRKGKG…PTGRLPHSYF (77 aa)). Positions 591-661 (KGKGHSVEDG…PTGRLPHSYF (71 aa)) are disordered. Basic and acidic residues predominate over residues 606-623 (DGVKKGLDGKGEVKKLSE).

Its subcellular location is the membrane. Functionally, may act as an inhibitor of TGF-beta signaling. This Xenopus tropicalis (Western clawed frog) protein is Vasorin (vasn).